Consider the following 314-residue polypeptide: Dihydropteroate synthase (314 aa).

Residues 10–294 enclose the Pterin-binding domain; the sequence is TVICGIINVT…DVASHRMAVE (285 aa). A Mg(2+)-binding site is contributed by Asn-17. Residues Asp-91, Asn-110, Asp-201, Lys-237, and 282 to 284 contribute to the (7,8-dihydropterin-6-yl)methyl diphosphate site; that span reads RVH.

It belongs to the DHPS family. In terms of assembly, homodimer. The cofactor is Mg(2+).

The enzyme catalyses (7,8-dihydropterin-6-yl)methyl diphosphate + 4-aminobenzoate = 7,8-dihydropteroate + diphosphate. It functions in the pathway cofactor biosynthesis; tetrahydrofolate biosynthesis; 7,8-dihydrofolate from 2-amino-4-hydroxy-6-hydroxymethyl-7,8-dihydropteridine diphosphate and 4-aminobenzoate: step 1/2. Its activity is regulated as follows. Is potently inhibited by sulfonamides, with Ki values between 25 nM and 850 nM. Catalyzes the condensation of para-aminobenzoate (pABA) with 6-hydroxymethyl-7,8-dihydropterin diphosphate (DHPt-PP) to form 7,8-dihydropteroate, the immediate precursor of folate derivatives. In terms of biological role, is the target for the sulfonamide group of antimicrobial drugs. Sulfonamide drugs act as pABA analogs, they inhibit the reaction by acting as alternative substrates, leading to a 'dead end' sulfa-pterin product. This is Dihydropteroate synthase (sulA) from Streptococcus pneumoniae (strain ATCC BAA-255 / R6).